The chain runs to 126 residues: Alpha-lactalbumin (126 aa).

A C-type lysozyme domain is found at Lys-1 to Cys-126. 4 disulfide bridges follow: Cys-6/Cys-126, Cys-30/Cys-117, Cys-63/Cys-82, and Cys-78/Cys-96. Asn-47 is a glycosylation site (N-linked (GlcNAc...) asparagine). Ca(2+)-binding residues include Lys-84, Asp-87, Asp-89, Asp-92, and Asp-93.

This sequence belongs to the glycosyl hydrolase 22 family. In terms of assembly, lactose synthase (LS) is a heterodimer of a catalytic component, beta1,4-galactosyltransferase (beta4Gal-T1) and a regulatory component, alpha-lactalbumin (LA). As to expression, mammary gland specific. Secreted in milk.

It localises to the secreted. Regulatory subunit of lactose synthase, changes the substrate specificity of galactosyltransferase in the mammary gland making glucose a good acceptor substrate for this enzyme. This enables LS to synthesize lactose, the major carbohydrate component of milk. In other tissues, galactosyltransferase transfers galactose onto the N-acetylglucosamine of the oligosaccharide chains in glycoproteins. The chain is Alpha-lactalbumin (LALBA) from Tachyglossus aculeatus aculeatus (Southeast Australian short-beaked echidna).